The primary structure comprises 493 residues: Glutamyl-tRNA(Gln) amidotransferase subunit A (493 aa).

Active-site charge relay system residues include Lys-79 and Ser-159. The active-site Acyl-ester intermediate is the Ser-183.

Belongs to the amidase family. GatA subfamily. As to quaternary structure, heterotrimer of A, B and C subunits.

It carries out the reaction L-glutamyl-tRNA(Gln) + L-glutamine + ATP + H2O = L-glutaminyl-tRNA(Gln) + L-glutamate + ADP + phosphate + H(+). In terms of biological role, allows the formation of correctly charged Gln-tRNA(Gln) through the transamidation of misacylated Glu-tRNA(Gln) in organisms which lack glutaminyl-tRNA synthetase. The reaction takes place in the presence of glutamine and ATP through an activated gamma-phospho-Glu-tRNA(Gln). This chain is Glutamyl-tRNA(Gln) amidotransferase subunit A, found in Brucella anthropi (strain ATCC 49188 / DSM 6882 / CCUG 24695 / JCM 21032 / LMG 3331 / NBRC 15819 / NCTC 12168 / Alc 37) (Ochrobactrum anthropi).